Here is a 561-residue protein sequence, read N- to C-terminus: Putative transport protein YbjL (561 aa).

5 consecutive transmembrane segments (helical) span residues 8–28 (LLNGNYILLLFVVLALGLCLG), 32–52 (LGSIQLGNSIGVLVVSLLLGQ), 66–86 (FMLFIFCVGVEAGPNFFSIFF), 94–114 (MLALVMVGSALVIALGLGKLF), and 158–178 (NLSLGYALTYLIGLVSLIVGA). RCK C-terminal domains follow at residues 200–288 (RGLD…SFRN) and 292–373 (VFDR…RIGF). 5 helical membrane passes run 383–403 (LLAFCAFFVIGLMIGMITFQF), 406–426 (FSFGMGNAAGLLFAGIMLGFM), 451–471 (VFMAGVGLSAGSGINNGLGAI), 475–495 (MLIAGLIVSLVPVVICFLFGA), and 540–560 (AIANVLLTLAGTIIVMVWPGL).

This sequence belongs to the AAE transporter (TC 2.A.81) family. YbjL subfamily.

Its subcellular location is the cell membrane. This Shigella boydii serotype 4 (strain Sb227) protein is Putative transport protein YbjL.